A 348-amino-acid polypeptide reads, in one-letter code: Ketol-acid reductoisomerase (NADP(+)) (348 aa).

The region spanning 1-179 (MDVHYDADPA…GGTHAGVIET (179 aa)) is the KARI N-terminal Rossmann domain. NADP(+) contacts are provided by residues 22–25 (YGSQ), arginine 45, serine 48, serine 50, and 80–83 (DQHQ). Residue histidine 105 is part of the active site. Glycine 131 is a binding site for NADP(+). A KARI C-terminal knotted domain is found at 180–325 (TFKDETETDL…QTLRGMMPWL (146 aa)). 4 residues coordinate Mg(2+): aspartate 188, glutamate 192, glutamate 224, and glutamate 228. Position 249 (serine 249) interacts with substrate. A disordered region spans residues 323–348 (PWLNGDETSADEDAPDAADTAPASSS). Over residues 339-348 (AADTAPASSS) the composition is skewed to low complexity.

Belongs to the ketol-acid reductoisomerase family. It depends on Mg(2+) as a cofactor.

The enzyme catalyses (2R)-2,3-dihydroxy-3-methylbutanoate + NADP(+) = (2S)-2-acetolactate + NADPH + H(+). The catalysed reaction is (2R,3R)-2,3-dihydroxy-3-methylpentanoate + NADP(+) = (S)-2-ethyl-2-hydroxy-3-oxobutanoate + NADPH + H(+). Its pathway is amino-acid biosynthesis; L-isoleucine biosynthesis; L-isoleucine from 2-oxobutanoate: step 2/4. It functions in the pathway amino-acid biosynthesis; L-valine biosynthesis; L-valine from pyruvate: step 2/4. Its function is as follows. Involved in the biosynthesis of branched-chain amino acids (BCAA). Catalyzes an alkyl-migration followed by a ketol-acid reduction of (S)-2-acetolactate (S2AL) to yield (R)-2,3-dihydroxy-isovalerate. In the isomerase reaction, S2AL is rearranged via a Mg-dependent methyl migration to produce 3-hydroxy-3-methyl-2-ketobutyrate (HMKB). In the reductase reaction, this 2-ketoacid undergoes a metal-dependent reduction by NADPH to yield (R)-2,3-dihydroxy-isovalerate. The polypeptide is Ketol-acid reductoisomerase (NADP(+)) (Salinibacter ruber (strain DSM 13855 / M31)).